We begin with the raw amino-acid sequence, 227 residues long: Cytochrome c oxidase subunit 2 (227 aa).

The Mitochondrial intermembrane segment spans residues 1–14 (MAHPVQLSLQDATS). Residues 15 to 45 (PIMEELITFHDHAFMAMSLISFLVLYALALT) traverse the membrane as a helical segment. Over 46–59 (LTTKLTNTNITDAQ) the chain is Mitochondrial matrix. The helical transmembrane segment at 60–87 (EMETIWTILPAVILILIALPSLRVLYLT) threads the bilayer. The Mitochondrial intermembrane portion of the chain corresponds to 88–227 (DEVNDPSLTI…IFEMGPVFTL (140 aa)). The Cu cation site is built by His161, Cys196, Glu198, Cys200, His204, and Met207. Residue Glu198 participates in Mg(2+) binding.

This sequence belongs to the cytochrome c oxidase subunit 2 family. Component of the cytochrome c oxidase (complex IV, CIV), a multisubunit enzyme composed of 14 subunits. The complex is composed of a catalytic core of 3 subunits MT-CO1, MT-CO2 and MT-CO3, encoded in the mitochondrial DNA, and 11 supernumerary subunits COX4I, COX5A, COX5B, COX6A, COX6B, COX6C, COX7A, COX7B, COX7C, COX8 and NDUFA4, which are encoded in the nuclear genome. The complex exists as a monomer or a dimer and forms supercomplexes (SCs) in the inner mitochondrial membrane with NADH-ubiquinone oxidoreductase (complex I, CI) and ubiquinol-cytochrome c oxidoreductase (cytochrome b-c1 complex, complex III, CIII), resulting in different assemblies (supercomplex SCI(1)III(2)IV(1) and megacomplex MCI(2)III(2)IV(2)). Found in a complex with TMEM177, COA6, COX18, COX20, SCO1 and SCO2. Interacts with TMEM177 in a COX20-dependent manner. Interacts with COX20. Interacts with COX16. Cu cation serves as cofactor.

Its subcellular location is the mitochondrion inner membrane. The enzyme catalyses 4 Fe(II)-[cytochrome c] + O2 + 8 H(+)(in) = 4 Fe(III)-[cytochrome c] + 2 H2O + 4 H(+)(out). Component of the cytochrome c oxidase, the last enzyme in the mitochondrial electron transport chain which drives oxidative phosphorylation. The respiratory chain contains 3 multisubunit complexes succinate dehydrogenase (complex II, CII), ubiquinol-cytochrome c oxidoreductase (cytochrome b-c1 complex, complex III, CIII) and cytochrome c oxidase (complex IV, CIV), that cooperate to transfer electrons derived from NADH and succinate to molecular oxygen, creating an electrochemical gradient over the inner membrane that drives transmembrane transport and the ATP synthase. Cytochrome c oxidase is the component of the respiratory chain that catalyzes the reduction of oxygen to water. Electrons originating from reduced cytochrome c in the intermembrane space (IMS) are transferred via the dinuclear copper A center (CU(A)) of subunit 2 and heme A of subunit 1 to the active site in subunit 1, a binuclear center (BNC) formed by heme A3 and copper B (CU(B)). The BNC reduces molecular oxygen to 2 water molecules using 4 electrons from cytochrome c in the IMS and 4 protons from the mitochondrial matrix. The polypeptide is Cytochrome c oxidase subunit 2 (MT-CO2) (Macaca fascicularis (Crab-eating macaque)).